A 492-amino-acid polypeptide reads, in one-letter code: Fascin-2 (492 aa).

This sequence belongs to the fascin family. In terms of tissue distribution, expressed in the inner ear. Abundant in the utricle.

The protein localises to the cytoplasm. It localises to the cytoskeleton. Its subcellular location is the cell projection. It is found in the stereocilium. Its function is as follows. Acts as an actin bundling protein. May play a pivotal role in photoreceptor cell-specific events, such as disk morphogenesis. Important for maintaining functional hair-cell bundles in the inner ear. May stiffen the longer stereocilia of hair-cell bundles in the inner ear enabling better force transmission to tip links. The protein is Fascin-2 (Fscn2) of Mus musculus (Mouse).